A 286-amino-acid chain; its full sequence is UPF0725 protein At2g20620 (286 aa).

Residues 1 to 49 (MVLETPVCSPIDKESSSDDVQLNKPPKKKRKLDVVYPPRDNTSSSSDVK) are disordered.

Belongs to the UPF0725 (EMB2204) family.

The polypeptide is UPF0725 protein At2g20620 (Arabidopsis thaliana (Mouse-ear cress)).